A 155-amino-acid polypeptide reads, in one-letter code: Small ribosomal subunit protein uS7 (155 aa).

This sequence belongs to the universal ribosomal protein uS7 family. Part of the 30S ribosomal subunit. Contacts proteins S9 and S11.

Functionally, one of the primary rRNA binding proteins, it binds directly to 16S rRNA where it nucleates assembly of the head domain of the 30S subunit. Is located at the subunit interface close to the decoding center, probably blocks exit of the E-site tRNA. In Corynebacterium glutamicum (strain R), this protein is Small ribosomal subunit protein uS7.